The primary structure comprises 269 residues: MKFAVIGNPISHSLSPLMHHANFQSLNLENTYEAINVPVNQFQDIKKIISEKSIDGFNVTIPHKERIIPYLDDINEQAKSVGAVNTVLVKDGKWIGYNTDGIGYVNGLKQIYEGIEDAYILILGAGGASKGIANELYKIVRPTLTVANRTMSRFNNWSLNINKINLSHAESHLDEFDIIINTTPAGMNGNTDSVISLNRLASHTLVSDIVYNPYKTPILIEAEQRGNPIYNGLDMFVHQGAESFKIWTNLEPDIKAMKNIVIQKLKGEL.

Shikimate-binding positions include 13-15 (SLS) and Thr-60. Lys-64 serves as the catalytic Proton acceptor. Glu-76 serves as a coordination point for NADP(+). Asn-85 and Asp-100 together coordinate shikimate. NADP(+) contacts are provided by residues 124-128 (GAGGA), 148-153 (NRTMSR), and Ile-209. Tyr-211 serves as a coordination point for shikimate. Gly-232 provides a ligand contact to NADP(+). A shikimate-binding site is contributed by Gln-239.

Belongs to the shikimate dehydrogenase family. Monomer or homodimer.

It catalyses the reaction shikimate + NADP(+) = 3-dehydroshikimate + NADPH + H(+). The protein operates within metabolic intermediate biosynthesis; chorismate biosynthesis; chorismate from D-erythrose 4-phosphate and phosphoenolpyruvate: step 4/7. Functionally, involved in the biosynthesis of the chorismate, which leads to the biosynthesis of aromatic amino acids. Catalyzes the reversible NADPH linked reduction of 3-dehydroshikimate (DHSA) to yield shikimate (SA). It can also use NAD to oxidize shikimate. The protein is Shikimate dehydrogenase (NADP(+)) of Staphylococcus epidermidis (strain ATCC 35984 / DSM 28319 / BCRC 17069 / CCUG 31568 / BM 3577 / RP62A).